Consider the following 870-residue polypeptide: Patatin-like phospholipase domain-containing protein NCU11180 (870 aa).

Disordered regions lie at residues 1–24 (MADD…PPEA) and 131–158 (KVIK…KGVA). A compositionally biased stretch (basic and acidic residues) spans 131 to 141 (KVIKTDRDEKR). Residues 142 to 155 (NKRGKDRKNKKPRK) are compositionally biased toward basic residues. A helical membrane pass occupies residues 183–203 (WPFLLFVSFWIVGLGMAYLAT). A disordered region spans residues 281 to 320 (EEVERELESQSQNSDSGVASGEETSNTKAGGGNNGNDKKT). Residues 289–308 (SQSQNSDSGVASGEETSNTK) are compositionally biased toward polar residues. The PNPLA domain maps to 399-590 (LCLSGGATFA…RTDIPIKSLN (192 aa)). The short motif at 430 to 434 (GTSGG) is the GXSXG element. Residue S432 is the Nucleophile of the active site. The active-site Proton acceptor is the D577. Disordered stretches follow at residues 735–786 (RRET…DRRG) and 804–870 (GREG…HSRT). Over residues 818–834 (TEDELTMTELEGEDDDG) the composition is skewed to acidic residues.

The protein belongs to the PLPL family.

Its subcellular location is the membrane. Probable lipid hydrolase. The sequence is that of Patatin-like phospholipase domain-containing protein NCU11180 from Neurospora crassa (strain ATCC 24698 / 74-OR23-1A / CBS 708.71 / DSM 1257 / FGSC 987).